The chain runs to 367 residues: Peptide chain release factor 2 (367 aa).

Residue Q254 is modified to N5-methylglutamine.

The protein belongs to the prokaryotic/mitochondrial release factor family. Methylated by PrmC. Methylation increases the termination efficiency of RF2.

The protein localises to the cytoplasm. Functionally, peptide chain release factor 2 directs the termination of translation in response to the peptide chain termination codons UGA and UAA. This chain is Peptide chain release factor 2, found in Neisseria meningitidis serogroup B (strain ATCC BAA-335 / MC58).